The primary structure comprises 238 residues: Probable transcriptional regulatory protein IL0164 (238 aa).

It belongs to the TACO1 family.

Its subcellular location is the cytoplasm. The sequence is that of Probable transcriptional regulatory protein IL0164 from Idiomarina loihiensis (strain ATCC BAA-735 / DSM 15497 / L2-TR).